We begin with the raw amino-acid sequence, 291 residues long: ATP synthase gamma chain (291 aa).

The protein belongs to the ATPase gamma chain family. As to quaternary structure, F-type ATPases have 2 components, CF(1) - the catalytic core - and CF(0) - the membrane proton channel. CF(1) has five subunits: alpha(3), beta(3), gamma(1), delta(1), epsilon(1). CF(0) has three main subunits: a, b and c.

The protein localises to the cell inner membrane. Its function is as follows. Produces ATP from ADP in the presence of a proton gradient across the membrane. The gamma chain is believed to be important in regulating ATPase activity and the flow of protons through the CF(0) complex. The chain is ATP synthase gamma chain from Chlorobium limicola (strain DSM 245 / NBRC 103803 / 6330).